The primary structure comprises 885 residues: DNA-directed RNA polymerase subunit Rpo1N (885 aa).

The Zn(2+) site is built by C60, C63, C70, H73, C100, C103, C150, and C153. Mg(2+) is bound by residues D464, D466, and D468.

The protein belongs to the RNA polymerase beta' chain family. In terms of assembly, part of the RNA polymerase complex. The cofactor is Mg(2+). It depends on Zn(2+) as a cofactor.

It is found in the cytoplasm. The catalysed reaction is RNA(n) + a ribonucleoside 5'-triphosphate = RNA(n+1) + diphosphate. In terms of biological role, DNA-dependent RNA polymerase (RNAP) catalyzes the transcription of DNA into RNA using the four ribonucleoside triphosphates as substrates. Forms the clamp head domain. The chain is DNA-directed RNA polymerase subunit Rpo1N from Thermoplasma acidophilum (strain ATCC 25905 / DSM 1728 / JCM 9062 / NBRC 15155 / AMRC-C165).